Consider the following 41-residue polypeptide: Large ribosomal subunit protein bL36B (41 aa).

It belongs to the bacterial ribosomal protein bL36 family.

The chain is Large ribosomal subunit protein bL36B from Vibrio campbellii (strain ATCC BAA-1116).